The sequence spans 344 residues: MAAASGVRRIKLGSQGLEVSAQGLGCMGLSIFDGTTKVETDLIALIHHAINSGITLLDTSDIYGPETNELLLGQALKDGMREKVELATKFGLLLKDQKLGYRGDPAYVRAACEASLRRLGVSCIDLYYQHRIDTTVPIEVTIGELKKLVEEGKIKYIGLSEACASTIRRAHAVHPLTAVQLEWSLWSRDVEEDIIPTCRELGIGIVAYSPLGLGFFAAGPKFIESMDNGDYRKGLPRFQQENLDHNKILYEKVNAMAEKKSCTPAQLALAWVHHQGNDVCPIPGTSKIKNLNQNIGALSVKLSIEEMAELDAMGHPDSVKGERSATYIVTYKNSETPPLSSWTS.

The active-site Proton donor is the Y63. H130 serves as a coordination point for substrate. 209–219 serves as a coordination point for NADP(+); that stretch reads SPLGLGFFAAG.

This sequence belongs to the aldo/keto reductase family.

This chain is Probable aldo-keto reductase 1, found in Arabidopsis thaliana (Mouse-ear cress).